We begin with the raw amino-acid sequence, 567 residues long: Zinc finger protein 143 (567 aa).

7 C2H2-type zinc fingers span residues 230 to 254, 260 to 284, 290 to 314, 320 to 344, 350 to 374, 380 to 404, and 410 to 433; these read FRCDYEGCGKLYTTAHHLKVHERSH, YQCDHGGCRKAFATGYGLKSHVRTH, YRCSEENCTKSFKTSGDLQKHVRTH, FKCPFEGCGRSFTTSNIRKVHIRTH, YYCSEPGCGRAFASATNYKNHVRIH, YVCTVPGCDKRFTEYSSLYKHHVVH, and YNCNHCGKTYKQISTLAMHKRTAH. Residues 506-520 are compositionally biased toward polar residues; that stretch reads SATESGPQHSHNLGG. The interval 506-525 is disordered; the sequence is SATESGPQHSHNLGGSESRP.

This sequence belongs to the GLI C2H2-type zinc-finger protein family.

It is found in the nucleus. Functionally, transcriptional activator. Activates the gene for selenocysteine tRNA (tRNAsec). Binds to the activator element (AE) motif of the selenocysteine tRNA gene promoter. This chain is Zinc finger protein 143 (znf143), found in Xenopus tropicalis (Western clawed frog).